A 495-amino-acid chain; its full sequence is ATP synthase subunit beta (495 aa).

178–185 contributes to the ATP binding site; sequence GGAGVGKT.

The protein belongs to the ATPase alpha/beta chains family. As to quaternary structure, F-type ATPases have 2 components, CF(1) - the catalytic core - and CF(0) - the membrane proton channel. CF(1) has five subunits: alpha(3), beta(3), gamma(1), delta(1), epsilon(1). CF(0) has three main subunits: a(1), b(2) and c(9-12). The alpha and beta chains form an alternating ring which encloses part of the gamma chain. CF(1) is attached to CF(0) by a central stalk formed by the gamma and epsilon chains, while a peripheral stalk is formed by the delta and b chains.

It localises to the cell membrane. The enzyme catalyses ATP + H2O + 4 H(+)(in) = ADP + phosphate + 5 H(+)(out). Produces ATP from ADP in the presence of a proton gradient across the membrane. The catalytic sites are hosted primarily by the beta subunits. The sequence is that of ATP synthase subunit beta from Bifidobacterium animalis subsp. lactis (strain AD011).